Consider the following 485-residue polypeptide: MTITPQNLIALLPLLIVGLTVVVVMLSIAWRRNHFLNATLSVIGLNAALVSLWFVGQVGAMDVTPLMRVDGFAMLYTGLVLLASLATCTFAYPWLEGYNDNKDEFYLLVLIAALGGILLANANHLASLFLGIELISLPLFGLVGYAFRQKRSLEASIKYTILSAAASSFLLFGMALVYAQSGDLSFVALGKNLGDGMLNEPLLLAGFGLMIVGLGFKLSLVPFHLWTPDVYQGAPAPVSTFLATASKIVIFGVVMRLFLYAPVGDSEAIRVVLAIIAFASIIFGNLMALSQTNIKRLLGYSSISHLGYLLVALIALQTGEMSMEAVGVYLAGYLFSSLGAFGVVSLMSSPYRGPDADSLFSYRGLFWHRPILAAVMTVMMLSLAGIPMTLGFIGKFYVLAVGVQAHLWWLVGAVVVGSAIGLYYYLRVAVSLYLHAPEQPGRDAPSNWQYSAGGIVVLISALLVLVLGVWPQPLISIVRLAMPLM.

14 helical membrane-spanning segments follow: residues 8–28 (LIAL…MLSI), 35–55 (FLNA…LWFV), 71–91 (GFAM…CTFA), 105–125 (FYLL…ANHL), 127–147 (SLFL…GYAF), 159–179 (YTIL…LVYA), 203–223 (LLAG…LVPF), 235–255 (PAPV…GVVM), 271–291 (VVLA…ALSQ), 297–317 (LLGY…IALQ), 326–346 (VGVY…VVSL), 373–393 (AAVM…LGFI), 408–430 (WWLV…RVAV), and 455–475 (IVVL…QPLI).

Belongs to the complex I subunit 2 family. In terms of assembly, NDH-1 is composed of 13 different subunits. Subunits NuoA, H, J, K, L, M, N constitute the membrane sector of the complex.

It is found in the cell inner membrane. It catalyses the reaction a quinone + NADH + 5 H(+)(in) = a quinol + NAD(+) + 4 H(+)(out). NDH-1 shuttles electrons from NADH, via FMN and iron-sulfur (Fe-S) centers, to quinones in the respiratory chain. The immediate electron acceptor for the enzyme in this species is believed to be ubiquinone. Couples the redox reaction to proton translocation (for every two electrons transferred, four hydrogen ions are translocated across the cytoplasmic membrane), and thus conserves the redox energy in a proton gradient. This Shigella dysenteriae serotype 1 (strain Sd197) protein is NADH-quinone oxidoreductase subunit N.